A 620-amino-acid polypeptide reads, in one-letter code: Cryptochrome-1 (620 aa).

The region spanning 3-132 is the Photolyase/cryptochrome alpha/beta domain; it reads VNAVHWFRKG…EVIVRISHTL (130 aa). 3 short sequence motifs (LIR) span residues 50 to 54, 82 to 87, and 151 to 156; these read NRWRF, DVFPRL, and KRFQTL. Residue serine 252 participates in FAD binding. 4 short sequence motifs (LIR) span residues 255-260, 271-276, 285-290, and 335-339; these read LRFGCL, DLYKKV, SLYGQL, and TGFPW. Glutamine 289 serves as a coordination point for FAD. Residue histidine 355 coordinates FAD. Positions 379–384 match the LIR 8 motif; it reads KVFEEL. 387–389 is a binding site for FAD; it reads DAD. 5 consecutive short sequence motifs (LIR) follow at residues 395–400, 411–416, 430–435, 486–491, and 492–497; these read GSWMWL, HCYCPV, RRYLPV, QIYQQL, and SRYRGL. The tract at residues 592-620 is disordered; sequence GTGISAGKRPNPEEETQSVGPKVQRQSTN.

This sequence belongs to the DNA photolyase class-1 family. As to quaternary structure, component of the circadian core oscillator, which includes the CRY proteins, CLOCK or NPAS2, BMAL1 or BMAL2, CSNK1E, and the PER proteins. It depends on FAD as a cofactor. (6R)-5,10-methylene-5,6,7,8-tetrahydrofolate is required as a cofactor. As to expression, expressed in the retina. High levels found in ganglion cells of the retina.

The protein resides in the cytoplasm. Its subcellular location is the nucleus. Its function is as follows. Transcriptional repressor which forms a core component of the circadian clock. The circadian clock, an internal time-keeping system, regulates various physiological processes through the generation of approximately 24 hour circadian rhythms in gene expression, which are translated into rhythms in metabolism and behavior. It is derived from the Latin roots 'circa' (about) and 'diem' (day) and acts as an important regulator of a wide array of physiological functions including metabolism, sleep, body temperature, blood pressure, endocrine, immune, cardiovascular, and renal function. Consists of two major components: the central clock, residing in the suprachiasmatic nucleus (SCN) of the brain, and the peripheral clocks that are present in nearly every tissue and organ system. Both the central and peripheral clocks can be reset by environmental cues, also known as Zeitgebers (German for 'timegivers'). The predominant Zeitgeber for the central clock is light, which is sensed by retina and signals directly to the SCN. The central clock entrains the peripheral clocks through neuronal and hormonal signals, body temperature and feeding-related cues, aligning all clocks with the external light/dark cycle. Circadian rhythms allow an organism to achieve temporal homeostasis with its environment at the molecular level by regulating gene expression to create a peak of protein expression once every 24 hours to control when a particular physiological process is most active with respect to the solar day. Transcription and translation of core clock components (CLOCK, NPAS2, BMAL1, BMAL2, PER1, PER2, PER3, CRY1 and CRY2) plays a critical role in rhythm generation, whereas delays imposed by post-translational modifications (PTMs) are important for determining the period (tau) of the rhythms (tau refers to the period of a rhythm and is the length, in time, of one complete cycle). A diurnal rhythm is synchronized with the day/night cycle, while the ultradian and infradian rhythms have a period shorter and longer than 24 hours, respectively. Disruptions in the circadian rhythms contribute to the pathology of cardiovascular diseases, cancer, metabolic syndromes and aging. A transcription/translation feedback loop (TTFL) forms the core of the molecular circadian clock mechanism. Transcription factors, CLOCK or NPAS2 and BMAL1 or BMAL2, form the positive limb of the feedback loop, act in the form of a heterodimer and activate the transcription of core clock genes and clock-controlled genes (involved in key metabolic processes), harboring E-box elements (5'-CACGTG-3') within their promoters. The core clock genes: PER1/2/3 and CRY1/2 which are transcriptional repressors form the negative limb of the feedback loop and interact with the CLOCK|NPAS2-BMAL1|BMAL2 heterodimer inhibiting its activity and thereby negatively regulating their own expression. This heterodimer also activates nuclear receptors NR1D1, NR1D2, RORA, RORB and RORG, which form a second feedback loop and which activate and repress BMAL1 transcription, respectively. CRY1 and CRY2 have redundant functions but also differential and selective contributions at least in defining the pace of the SCN circadian clock and its circadian transcriptional outputs. More potent transcriptional repressor in cerebellum and liver than CRY2, though more effective in lengthening the period of the SCN oscillator. On its side, CRY2 seems to play a critical role in tuning SCN circadian period by opposing the action of CRY1. With CRY2, is dispensable for circadian rhythm generation but necessary for the development of intercellular networks for rhythm synchrony. Capable of translocating circadian clock core proteins such as PER proteins to the nucleus. Interacts with CLOCK:BMAL1 independently of PER proteins and is found at CLOCK:BMAL1-bound sites, suggesting that CRY may act as a molecular gatekeeper to maintain CLOCK:BMAL1 in a poised and repressed state until the proper time for transcriptional activation. The polypeptide is Cryptochrome-1 (CRY1) (Sylvia borin (Garden warbler)).